Here is a 125-residue protein sequence, read N- to C-terminus: Succinate dehydrogenase cytochrome b556 subunit (125 aa).

The Cytoplasmic segment spans residues 1 to 22 (MNAKRPVNLDLTKFHFPPMAIL). The helical transmembrane segment at 23–48 (SIGHRISGFVLFLCMPLMFYLLHRAT) threads the bilayer. Residues 49–65 (ASAESFYHLHQLLLHNG) lie on the Periplasmic side of the membrane. A helical membrane pass occupies residues 66–86 (WIKLAVWIMLSATLFHLFAGI). A heme-binding site is contributed by His81. Over 87–104 (RHLAMDLGFWESVPEGRI) the chain is Cytoplasmic. A helical membrane pass occupies residues 105–125 (SAYTVFVVSFIAIVLAGVWIW).

The protein belongs to the cytochrome b560 family. Part of an enzyme complex containing four subunits: a flavoprotein, an iron-sulfur protein, plus two membrane-anchoring proteins, SdhC and SdhD. The complex can form homotrimers. Requires heme as cofactor.

The protein resides in the cell inner membrane. It participates in carbohydrate metabolism; tricarboxylic acid cycle. In terms of biological role, membrane-anchoring subunit of succinate dehydrogenase (SDH). The protein is Succinate dehydrogenase cytochrome b556 subunit (sdhC) of Coxiella burnetii (strain RSA 493 / Nine Mile phase I).